The sequence spans 152 residues: ESAT-6 secretion machinery protein EssA (152 aa).

Over 1–114 (MLMNSVIALT…PYIQNKQEKK (114 aa)) the chain is Cytoplasmic. Residues 115 to 135 (IFPYILMSVGAFLTLGFVIFS) form a helical membrane-spanning segment. Residues 136–152 (IHKGRRTKNESARKSNI) are Extracellular-facing.

This sequence belongs to the EssA family.

The protein localises to the cell membrane. Component of the ESAT-6 secretion system (Ess). Required for the secretion of EsxA. This Staphylococcus aureus (strain MRSA252) protein is ESAT-6 secretion machinery protein EssA.